The primary structure comprises 2711 residues: Chromodomain-helicase-DNA-binding protein 6 (2711 aa).

4 stretches are compositionally biased toward basic and acidic residues: residues 1–12, 100–115, 122–151, and 158–171; these read MKMKIQKKEKQL, EPGE…DREP, EPKE…DGVK, and EASG…KRSC. Disordered stretches follow at residues 1-52 and 66-243; these read MKMK…EEAA and EEAD…QVKR. The required for DNA-dependent ATPase activity stretch occupies residues 1–746; the sequence is MKMKIQKKEK…MMELRKCCNH (746 aa). The span at 214 to 224 shows a compositional bias: low complexity; the sequence is SLPNPSLQSPE. 2 consecutive Chromo domains span residues 291–342 and 374–438; these read NIIE…KDPR and IEID…KHVE. A Helicase ATP-binding domain is found at 472–646; sequence LFNWYNRKNC…FSLLNFLEPS (175 aa). Residue 485-492 participates in ATP binding; that stretch reads DEMGLGKT. The DEAH box signature appears at 597-600; sequence DEAH. The 170-residue stretch at 786 to 955 folds into the Helicase C-terminal domain; sequence LIDKLLPKLI…LSKMEVEDLL (170 aa). A disordered region spans residues 1318–1389; it reads SLSAEQGVTD…SDPDKSPWPV (72 aa). Polar residues predominate over residues 1320–1329; that stretch reads SAEQGVTDGT. Residues 1332-1350 are compositionally biased toward basic and acidic residues; that stretch reads IPERGNIDKEDSAEDKLDG. One can recognise a Myb-like domain in the interval 1448 to 1502; sequence RWTRREQADFYRTVSSFGVVYDQEKKAFDWTQFRIISRLDKKSDESLEHYFYSFV. Serine 1865 carries the phosphoserine modification. Disordered stretches follow at residues 1951–1978, 1997–2059, 2124–2147, 2321–2350, 2373–2419, 2550–2602, and 2641–2711; these read SEDS…TVEG, EPWK…ASGI, LPTP…ATEH, TTLS…QAEK, GFGT…RGFL, SASL…ITTS, and RHSE…EDTN. Positions 2017–2036 are enriched in basic and acidic residues; the sequence is SEPKPEDMDFENKDDYEKDG. Low complexity-rich tracts occupy residues 2130–2140 and 2333–2349; these read SSSAGSRSSLS and ATSS…SQAE. Positions 2550–2563 are enriched in low complexity; the sequence is SASLASTKSGTSAT. Residues 2565 to 2586 show a composition bias toward basic and acidic residues; the sequence is KSTEDKLSGHDVNTDALVDDKP. Polar residues-rich tracts occupy residues 2591–2602 and 2677–2688; these read FSDQSEPTITTS and SDQNCTESSATV. Residues 2690–2711 are compositionally biased toward basic and acidic residues; that stretch reads PEREHVAQAREEGLKDSNEDTN.

This sequence belongs to the SNF2/RAD54 helicase family. In terms of assembly, interacts with NFE2L2; involved in activation of the transcription. As to expression, widely expressed.

The protein resides in the nucleus. Its subcellular location is the nucleoplasm. It carries out the reaction ATP + H2O = ADP + phosphate + H(+). ATP-dependent chromatin-remodeling factor. Regulates transcription by disrupting nucleosomes in a largely non-sliding manner which strongly increases the accessibility of chromatin. Activates transcription of specific genes in response to oxidative stress through interaction with NFE2L2. The polypeptide is Chromodomain-helicase-DNA-binding protein 6 (Chd6) (Mus musculus (Mouse)).